The primary structure comprises 407 residues: MLEIILGVFFFTAIVVALVFVILGAKSKLVAEGNVEVLINGERTIHVPIGSKLLTALADNNLFVSSACGGGGTCAQCRVQVLEGGGEILPTELSHITKREAAQGDRLSCQVTVKQNMKIHVHEEVFGVKKWECTVRSNRNVATFIKELVLELPAGENVDFRAGGYIQIECPPYDCKFSDFAIEPEYREDWDKYDLWKIESHVKAPAIRAYSMANYPEEKGIIMLNVRIATPPWGKEGTVPPGVMSSYIFNLKPGDKVTISGPFGEFFARDTDKEMVFIGGGAGMAPMRSHIFDQLLRLKSKRKMTFWYGARSLREAFYVEEFDRLQAENPNFKWFLGLSDPKPEDGWTGYTGFIHNILYEQYLKNHPAPEDCEYYMCGPPMMNSAVIQMLLDIGVDRENIMLDDFGG.

A helical transmembrane segment spans residues 4–24 (IILGVFFFTAIVVALVFVILG). One can recognise a 2Fe-2S ferredoxin-type domain in the interval 33–125 (GNVEVLINGE…NMKIHVHEEV (93 aa)). The [2Fe-2S] cluster site is built by C68, C74, C77, and C109. Residues 128 to 269 (VKKWECTVRS…SGPFGEFFAR (142 aa)) enclose the FAD-binding FR-type domain.

Belongs to the NqrF family. As to quaternary structure, composed of six subunits; NqrA, NqrB, NqrC, NqrD, NqrE and NqrF. Requires [2Fe-2S] cluster as cofactor. It depends on FAD as a cofactor.

It localises to the cell inner membrane. It carries out the reaction a ubiquinone + n Na(+)(in) + NADH + H(+) = a ubiquinol + n Na(+)(out) + NAD(+). NQR complex catalyzes the reduction of ubiquinone-1 to ubiquinol by two successive reactions, coupled with the transport of Na(+) ions from the cytoplasm to the periplasm. The first step is catalyzed by NqrF, which accepts electrons from NADH and reduces ubiquinone-1 to ubisemiquinone by a one-electron transfer pathway. This is Na(+)-translocating NADH-quinone reductase subunit F from Methylococcus capsulatus (strain ATCC 33009 / NCIMB 11132 / Bath).